An 804-amino-acid polypeptide reads, in one-letter code: Endoplasmin (804 aa).

Positions 1–21 (MRALWVLGLCCVLLTFGSVRA) are cleaved as a signal peptide. An SRT pseudosubstrate motif motif is present at residues 42–44 (SRT). N-linked (GlcNAc...) asparagine glycosylation occurs at asparagine 62. At serine 64 the chain carries Phosphoserine. Asparagine 107 carries N-linked (GlcNAc...) asparagine glycosylation. Residues asparagine 107, aspartate 149, and asparagine 162 each coordinate ATP. The residue at position 168 (lysine 168) is an N6-(2-hydroxyisobutyryl)lysine. Serine 172 carries the phosphoserine modification. Residue phenylalanine 199 coordinates ATP. Residue asparagine 217 is glycosylated (N-linked (GlcNAc...) asparagine). The disordered stretch occupies residues 288–323 (TVEEPMEEEEAAKEEKEESDDEAAVEEEEEEKKPKT). Over residues 289 to 317 (VEEPMEEEEAAKEEKEESDDEAAVEEEEE) the composition is skewed to acidic residues. Phosphoserine occurs at positions 306 and 403. Lysine 404 bears the N6-succinyllysine mark. N-linked (GlcNAc...) asparagine glycosylation is present at asparagine 445. Residue serine 447 is modified to Phosphoserine. Position 479 is an N6-acetyllysine (lysine 479). N-linked (GlcNAc...) asparagine glycosylation is found at asparagine 481 and asparagine 502. At lysine 633 the chain carries N6-succinyllysine. A disordered region spans residues 750–804 (DPDAKVEEEPEEEPEETTEDTTEDTEQDDDEEMDAGADEEEQETSETSTAEKDEL). Over residues 757 to 793 (EEPEEEPEETTEDTTEDTEQDDDEEMDAGADEEEQET) the composition is skewed to acidic residues. Positions 801 to 804 (KDEL) match the Prevents secretion from ER motif.

It belongs to the heat shock protein 90 family. Homodimer; disulfide-linked. Component of an EIF2 complex at least composed of CELF1/CUGBP1, CALR, CALR3, EIF2S1, EIF2S2, HSP90B1 and HSPA5. Part of a large chaperone multiprotein complex comprising DNAJB11, HSP90B1, HSPA5, HYOU, PDIA2, PDIA4, PDIA6, PPIB, SDF2L1, UGGT1 and very small amounts of ERP29, but not, or at very low levels, CALR nor CANX. Interacts with AIMP1; regulates its retention in the endoplasmic reticulum. Hyperglycosylated form interacts with OS9; promoting its degradation by the endoplasmic reticulum associated degradation (ERAD). Interacts with CNPY3. This interaction is disrupted in the presence of ATP. Interacts with TLR4 and TLR9, but not with TLR3. Interacts with MZB1 in a calcium-dependent manner. Interacts with METTL23. Interacts with IL1B; the interaction facilitates cargo translocation into the ERGIC. Interacts with EIF2AK3. Post-translationally, phosphorylated by CK2. In terms of processing, N-glycosylated cotranslationally at Asn-217 by STT3A-containing OST-A complex: this glycosylation is constitutive. In response to various stress, 5 additional facultative sites (Asn-62, Asn-107, Asn-445, Asn-481 and Asn-502) can be glycosylated post-translationally by STT3B-containing OST-B complex, leading to a hyperglycosylated form that is degraded by the ER-associated degradation (ERAD) pathway. In normal conditions, the OST-A complex together with CCDC134 prevent glycosylation at facultative sites during protein folding, thereby preventing hyperglycosylation. Mechanistically, nascent HSP90B1 is tethered during translation to a specialized CCDC134-containing translocon that forms a microenvironment for its folding, in which STT3A associates with the SRT pseudosubstrate motif, and prevents access to facultative glycosylation sites until folding is completed, rendering its facultative sites inaccessible to the OST-B complex.

The protein localises to the endoplasmic reticulum lumen. It is found in the sarcoplasmic reticulum lumen. The protein resides in the melanosome. The catalysed reaction is ATP + H2O = ADP + phosphate + H(+). In terms of biological role, ATP-dependent chaperone involved in the processing of proteins in the endoplasmic reticulum, regulating their transport. Together with MESD, acts as a modulator of the Wnt pathway by promoting the folding of LRP6, a coreceptor of the canonical Wnt pathway. When associated with CNPY3, required for proper folding of Toll-like receptors. Promotes folding and trafficking of TLR4 to the cell surface. May participate in the unfolding of cytosolic leaderless cargos (lacking the secretion signal sequence) such as the interleukin 1/IL-1 to facilitate their translocation into the ERGIC (endoplasmic reticulum-Golgi intermediate compartment) and secretion; the translocation process is mediated by the cargo receptor TMED10. In Sus scrofa (Pig), this protein is Endoplasmin (HSP90B1).